A 360-amino-acid polypeptide reads, in one-letter code: Phospho-N-acetylmuramoyl-pentapeptide-transferase (360 aa).

10 helical membrane passes run 26–46, 70–90, 97–117, 134–154, 167–187, 199–219, 236–256, 263–283, 288–308, and 338–358; these read AILGVMTALGLSLLLGPWVIN, GTPTMGGTLILFAIVFATLLW, YVLAVLFVTLSFGLVGWVDDY, YFWQSLAGFTVAYGLYVTAQI, GVALELGVFYIILTYFMVVGF, GLAIMPTVMVGSALGIIAYLV, AGELVVYCAALAGAGLGFLWF, VFMGDVGALALGAALGIIAVI, IVFIIMSGIFVMETVSVILQV, and VIVRFWIITVMLVLFGLATLK.

It belongs to the glycosyltransferase 4 family. MraY subfamily. The cofactor is Mg(2+).

Its subcellular location is the cell inner membrane. The enzyme catalyses UDP-N-acetyl-alpha-D-muramoyl-L-alanyl-gamma-D-glutamyl-meso-2,6-diaminopimeloyl-D-alanyl-D-alanine + di-trans,octa-cis-undecaprenyl phosphate = di-trans,octa-cis-undecaprenyl diphospho-N-acetyl-alpha-D-muramoyl-L-alanyl-D-glutamyl-meso-2,6-diaminopimeloyl-D-alanyl-D-alanine + UMP. The protein operates within cell wall biogenesis; peptidoglycan biosynthesis. Its function is as follows. Catalyzes the initial step of the lipid cycle reactions in the biosynthesis of the cell wall peptidoglycan: transfers peptidoglycan precursor phospho-MurNAc-pentapeptide from UDP-MurNAc-pentapeptide onto the lipid carrier undecaprenyl phosphate, yielding undecaprenyl-pyrophosphoryl-MurNAc-pentapeptide, known as lipid I. The protein is Phospho-N-acetylmuramoyl-pentapeptide-transferase of Saccharophagus degradans (strain 2-40 / ATCC 43961 / DSM 17024).